A 613-amino-acid polypeptide reads, in one-letter code: Dihydroxy-acid dehydratase (613 aa).

A Mg(2+)-binding site is contributed by aspartate 81. Cysteine 122 contacts [2Fe-2S] cluster. Mg(2+) is bound by residues aspartate 123 and lysine 124. Lysine 124 bears the N6-carboxylysine mark. Cysteine 193 provides a ligand contact to [2Fe-2S] cluster. Glutamate 489 contributes to the Mg(2+) binding site. The active-site Proton acceptor is serine 515.

The protein belongs to the IlvD/Edd family. In terms of assembly, homodimer. Requires [2Fe-2S] cluster as cofactor. The cofactor is Mg(2+).

It catalyses the reaction (2R)-2,3-dihydroxy-3-methylbutanoate = 3-methyl-2-oxobutanoate + H2O. The enzyme catalyses (2R,3R)-2,3-dihydroxy-3-methylpentanoate = (S)-3-methyl-2-oxopentanoate + H2O. It participates in amino-acid biosynthesis; L-isoleucine biosynthesis; L-isoleucine from 2-oxobutanoate: step 3/4. Its pathway is amino-acid biosynthesis; L-valine biosynthesis; L-valine from pyruvate: step 3/4. Its function is as follows. Functions in the biosynthesis of branched-chain amino acids. Catalyzes the dehydration of (2R,3R)-2,3-dihydroxy-3-methylpentanoate (2,3-dihydroxy-3-methylvalerate) into 2-oxo-3-methylpentanoate (2-oxo-3-methylvalerate) and of (2R)-2,3-dihydroxy-3-methylbutanoate (2,3-dihydroxyisovalerate) into 2-oxo-3-methylbutanoate (2-oxoisovalerate), the penultimate precursor to L-isoleucine and L-valine, respectively. The protein is Dihydroxy-acid dehydratase of Pseudomonas fluorescens (strain SBW25).